Here is a 364-residue protein sequence, read N- to C-terminus: Mannonate dehydratase (364 aa).

The protein belongs to the mannonate dehydratase family. Requires Fe(2+) as cofactor. Mn(2+) serves as cofactor.

It catalyses the reaction D-mannonate = 2-dehydro-3-deoxy-D-gluconate + H2O. It participates in carbohydrate metabolism; pentose and glucuronate interconversion. Functionally, catalyzes the dehydration of D-mannonate. The chain is Mannonate dehydratase from Endomicrobium trichonymphae.